The chain runs to 582 residues: SHC-transforming protein 2 (582 aa).

Disordered stretches follow at residues 1–24 and 47–70; these read MTQGPGGRAPPAPPAPPEPEAPTT and GPAAARAAGASGGADPQPEPAGPG. Over residues 8–20 the composition is skewed to pro residues; the sequence is RAPPAPPAPPEPE. The PID domain maps to 147-329; the sequence is LGPGVSYVVR…AGPEESAWGD (183 aa). The tract at residues 330 to 486 is CH1; it reads EEDSLEHNYY…PTEEQLRQEP (157 aa). 3 positions are modified to phosphotyrosine: tyrosine 338, tyrosine 339, and tyrosine 414. The interval 460–481 is disordered; that stretch reads PLEDQWPSPPTRRAPVAPTEEQ. One can recognise an SH2 domain in the interval 487 to 578; that stretch reads WYHGRMSRRA…ESELHLRGVV (92 aa).

Interacts with the Trk receptors in a phosphotyrosine-dependent manner and MEGF12. Once activated, binds to GRB2. Phosphorylated on tyrosines by the Trk receptors. In terms of tissue distribution, expressed in brain. Expressed at high level in the hypothalamus and at low level in the caudate nucleus.

In terms of biological role, signaling adapter that couples activated growth factor receptors to signaling pathway in neurons. Involved in the signal transduction pathways of neurotrophin-activated Trk receptors in cortical neurons. The chain is SHC-transforming protein 2 (SHC2) from Homo sapiens (Human).